A 409-amino-acid polypeptide reads, in one-letter code: MMKKNNSTKRGPQDGNHQCAPPEKVGWVRKFCGKGIFREIWKNRYVVLKGDQLYISEKEVKDEKNIQEVFDLSDYEKCEELRKSKSRSKKNHSKFTLAHSKQPGNTAPNLIFLAVSPEEKESWINALNSAITRAKNRVLDEVTVEEDSYLAHPTRDRAKIQHSRRPPTRGHLMAVASTSTSDGMLTLDLIQEEDPSPEEPTSCAESFRVDLDKSVAQLAGSRRRADSDRIQPSSDRASGLPRLWEKPDKGATYTPQAPKKLTATEKSRCASLEEILSQRDAVPAHTLQRRAEDPPTPIPHAPGQLSRIQDLVARKLEKTQELLAEVQGLGDGKRKAKEPPRSPPDSESEQLLLETERLLGEASSNWSQAKRVLQEVRELRDLYRQMDLQTPDSHLRQTTQHSQYRKSLM.

The interval 1–20 (MMKKNNSTKRGPQDGNHQCA) is disordered. The PH domain maps to 21–132 (PPEKVGWVRK…WINALNSAIT (112 aa)). The tract at residues 133–193 (RAKNRVLDEV…MLTLDLIQEE (61 aa)) is interaction with capping proteins (CPs). An interaction with ATM, CKIP, IFP35 and NMI region spans residues 136 to 308 (NRVLDEVTVE…PHAPGQLSRI (173 aa)). Disordered stretches follow at residues 218-304 (LAGS…APGQ), 325-350 (EVQGLGDGKRKAKEPPRSPPDSESEQ), and 390-409 (TPDSHLRQTTQHSQYRKSLM). A phosphoserine mark is found at serine 227 and serine 271. Positions 308–409 (IQDLVARKLE…QHSQYRKSLM (102 aa)) are negative regulator of AP-1 activity. A compositionally biased stretch (basic and acidic residues) spans 331 to 340 (DGKRKAKEPP). Serine 342 carries the phosphoserine modification. The segment covering 390-402 (TPDSHLRQTTQHS) has biased composition (polar residues).

As to quaternary structure, heterodimer or homodimer. Interacts with CK2 and actin capping subunits (capping protein CP-alpha and CP-beta). CKIP1 and CK2 together inhibit the activity of actin capping protein at the barbed ends of actin filaments. Interacts with ATM, IFP35, JUN, JUND, NMI and PI3K. Interacts with AKT1, AKT2 and AKT3 (each isozyme of PKB), PtdIns(3,5)P2, PtdIns(4,5)P2 and PtdIns(3,4,5)P2. Post-translationally, C-terminal fragments could be released during apoptosis via caspase-3-dependent cleavage.

The protein localises to the membrane. It is found in the nucleus. Its subcellular location is the cytoplasm. In terms of biological role, plays a role in the regulation of the actin cytoskeleton through its interactions with actin capping protein (CP). May function to target CK2 to the plasma membrane thereby serving as an adapter to facilitate the phosphorylation of CP by protein kinase 2 (CK2). Appears to target ATM to the plasma membrane. Also implicated in PI3K-regulated muscle differentiation, the regulation of AP-1 activity (plasma membrane bound AP-1 regulator that translocates to the nucleus) and the promotion of apoptosis induced by tumor necrosis factor TNF. When bound to PKB, it inhibits it probably by decreasing PKB level of phosphorylation. This chain is Pleckstrin homology domain-containing family O member 1 (PLEKHO1), found in Bos taurus (Bovine).